The sequence spans 298 residues: MSSQRLRIAIQKKGRLSKECQELFKRCGMKFNISGERLVVHSENMPIDLLLVRDDDIPSLIMDGVVDLGVIGENELEEVRLERKALGEPSAFTTLRRLDFGGCRLSIAIDKDEVYNGPQDLAGKRIATTYPQLLKSFMDEQGIPFSTCILNGSVEVAPRAGLADAIADLVSTGATLEANGLKEAEVIFRSKATLIQREGEFDADKAALINKLLTRMQGCIQAKESKYIMLHAPTDKLDAIKDLLPGAEDPTVLPLSRDGAKVAVHLVSTENLFWETMEQLKALGASSILVLPIEKMME.

The protein belongs to the ATP phosphoribosyltransferase family. Long subfamily. Mg(2+) serves as cofactor.

The protein resides in the cytoplasm. It catalyses the reaction 1-(5-phospho-beta-D-ribosyl)-ATP + diphosphate = 5-phospho-alpha-D-ribose 1-diphosphate + ATP. It functions in the pathway amino-acid biosynthesis; L-histidine biosynthesis; L-histidine from 5-phospho-alpha-D-ribose 1-diphosphate: step 1/9. With respect to regulation, feedback inhibited by histidine. Catalyzes the condensation of ATP and 5-phosphoribose 1-diphosphate to form N'-(5'-phosphoribosyl)-ATP (PR-ATP). Has a crucial role in the pathway because the rate of histidine biosynthesis seems to be controlled primarily by regulation of HisG enzymatic activity. The sequence is that of ATP phosphoribosyltransferase from Aliivibrio fischeri (strain ATCC 700601 / ES114) (Vibrio fischeri).